The chain runs to 358 residues: MSADAAAGAPLPRLCCLEKGPNGYGFHLHGEKGKLGQYIRLVEPGSPAEKAGLLAGDRLVEVNGENVEKETHQQVVSRIRAALNAVRLLVVDPETDEQLQKLGVQVREELLRAQEAPGQAEPPAAAEVQGAGNENEPREADKSHPEQRELRPRLCTMKKGPSGYGFNLHSDKSKPGQFIRSVDPDSPAEASGLRAQDRIVEVNGVCMEGKQHGDVVSAIRAGGDETKLLVVDRETDEFFKKCRVIPSQEHLNGPLPVPFTNGEIQKENSREALAEAALESPRPALVRSASSDTSEELNSQDSPPKQDSTAPSSTSSSDPILDFNISLAMAKERAHQKRSSKRAPQMDWSKKNELFSNL.

Serine 2 is modified (N-acetylserine). Serine 2 and serine 46 each carry phosphoserine. The PDZ 1 domain occupies 14–94 (LCCLEKGPNG…AVRLLVVDPE (81 aa)). Residues 114 to 132 (QEAPGQAEPPAAAEVQGAG) are compositionally biased toward low complexity. Positions 114–192 (QEAPGQAEPP…DPDSPAEASG (79 aa)) are disordered. Basic and acidic residues predominate over residues 135-152 (NEPREADKSHPEQRELRP). Residues 154 to 234 (LCTMKKGPSG…ETKLLVVDRE (81 aa)) enclose the PDZ 2 domain. Serine 162, serine 269, serine 280, serine 290, and serine 291 each carry phosphoserine. A disordered region spans residues 277-358 (ALESPRPALV…SKKNELFSNL (82 aa)). The span at 288 to 306 (SASSDTSEELNSQDSPPKQ) shows a compositional bias: polar residues. Threonine 293 is modified (phosphothreonine). A phosphoserine mark is found at serine 294, serine 299, and serine 302. Over residues 307-319 (DSTAPSSTSSSDP) the composition is skewed to low complexity. The segment covering 348-358 (WSKKNELFSNL) has biased composition (basic and acidic residues).

In terms of assembly, homodimer, and heterodimer with NHERF2. Binds the N-termini of EZR, RDX and MSN. Binds the C-termini of PDGFRA, PDGFRB, ADRB2, NOS2 and CFTR. Binds ARHGAP17, EPI64, RACK1, OPRK1, GNAQ, CTNNB1 and PLCB3. Binds PDZK1. Interacts with CLCN3. Binds the C-terminus of PAG1. In resting T-cells, part of a PAG1-NHERF1-MSN complex which is disrupted upon TCR activation. Forms a complex with CFTR and SLC4A7. Forms a complex with SLC4A7 and ATP6V1B1. Interacts with TRPC4 (via the PDZ-binding domain). Directly interacts with HTR4. Interacts (via the PDZ 1 domain) with PODXL (via the C-terminal PDZ-binding motif DTHL); interaction is not detected in glomerular epithelium cells. Interacts (via the PDZ 1 domain) with PODXL (via the C-terminal PDZ-binding motif DTHL); the interaction take place early in the secretory pathway and is necessary for its apical membrane sorting. Interacts with SLC26A3. Interacts with MCC. Interacts with SLC34A1. Interacts (via the PDZ domains) with SLC26A6 isoform 4 and isoform 5. Interacts (via PDZ domains) with ACE2 (via PDZ-binding motif); the interaction may enhance ACE2 membrane residence. Post-translationally, phosphorylated on serine residues. In terms of tissue distribution, detected in liver, kidney, pancreas, prostate, spleen, small intestine and placenta, in particular in the syncytiotrophoblast.

The protein localises to the cytoplasm. Its subcellular location is the apical cell membrane. The protein resides in the endomembrane system. It localises to the cell projection. It is found in the filopodium. The protein localises to the ruffle. Its subcellular location is the microvillus. Its function is as follows. Scaffold protein that connects plasma membrane proteins with members of the ezrin/moesin/radixin family and thereby helps to link them to the actin cytoskeleton and to regulate their surface expression. Necessary for recycling of internalized ADRB2. Was first known to play a role in the regulation of the activity and subcellular location of SLC9A3. Necessary for cAMP-mediated phosphorylation and inhibition of SLC9A3. May enhance Wnt signaling. May participate in HTR4 targeting to microvilli. Involved in the regulation of phosphate reabsorption in the renal proximal tubules. Involved in sperm capacitation. May participate in the regulation of the chloride and bicarbonate homeostasis in spermatozoa. This chain is Na(+)/H(+) exchange regulatory cofactor NHE-RF1, found in Homo sapiens (Human).